Reading from the N-terminus, the 612-residue chain is DNA mismatch repair protein MutL (612 aa).

Belongs to the DNA mismatch repair MutL/HexB family.

Functionally, this protein is involved in the repair of mismatches in DNA. It is required for dam-dependent methyl-directed DNA mismatch repair. May act as a 'molecular matchmaker', a protein that promotes the formation of a stable complex between two or more DNA-binding proteins in an ATP-dependent manner without itself being part of a final effector complex. The polypeptide is DNA mismatch repair protein MutL (Herminiimonas arsenicoxydans).